The chain runs to 216 residues: Large ribosomal subunit protein uL3 (216 aa).

The tract at residues 119–143 (GYQGNIHKDGQSRGPMAHGSRYHRR) is disordered.

It belongs to the universal ribosomal protein uL3 family. Part of the 50S ribosomal subunit. Forms a cluster with proteins L14 and L19.

Its function is as follows. One of the primary rRNA binding proteins, it binds directly near the 3'-end of the 23S rRNA, where it nucleates assembly of the 50S subunit. This chain is Large ribosomal subunit protein uL3, found in Levilactobacillus brevis (strain ATCC 367 / BCRC 12310 / CIP 105137 / JCM 1170 / LMG 11437 / NCIMB 947 / NCTC 947) (Lactobacillus brevis).